The following is a 508-amino-acid chain: Glycogen synthase (508 aa).

Residue K27 participates in ADP-alpha-D-glucose binding.

It belongs to the glycosyltransferase 1 family. Bacterial/plant glycogen synthase subfamily.

It catalyses the reaction [(1-&gt;4)-alpha-D-glucosyl](n) + ADP-alpha-D-glucose = [(1-&gt;4)-alpha-D-glucosyl](n+1) + ADP + H(+). The protein operates within glycan biosynthesis; glycogen biosynthesis. Synthesizes alpha-1,4-glucan chains using ADP-glucose. This is Glycogen synthase from Photobacterium profundum (strain SS9).